Reading from the N-terminus, the 1384-residue chain is ABC transporter C family member 2 (1384 aa).

The ABC transmembrane type-1 1 domain maps to 104–388; the sequence is NKISVATKIF…LPEAIHRALS (285 aa). The next 5 membrane-spanning stretches (helical) occupy residues 112–132, 140–160, 226–246, 247–267, and 333–353; these read IFVA…IYYI, TFKF…SLTL, IFVF…IVGL, SGLV…FLST, and MITQ…YALT. Residues 505-724 form the ABC transporter 1 domain; it reads IEYDGAVQPS…GIDFESIMKT (220 aa). 537 to 544 is an ATP binding site; the sequence is GIVGSGKT. The disordered stretch occupies residues 729-756; it reads IDENDQSSTSTTDKKSSTSSSSSELKKS. A compositionally biased stretch (low complexity) spans 735–756; the sequence is SSTSTTDKKSSTSSSSSELKKS. 5 consecutive transmembrane segments (helical) span residues 813 to 833, 852 to 872, 941 to 961, 1036 to 1056, and 1061 to 1081; these read LFFL…LSDF, ILYY…RYFM, LFMM…LVVV, GIRL…SSLF, and GFSV…NWTI. The ABC transmembrane type-1 2 domain occupies 814–1093; the sequence is FFLTCALYFI…MTELEVKMNS (280 aa). The ABC transporter 2 domain occupies 1137–1371; sequence VEFKNVEIKY…EGSRFKKLVK (235 aa). Residue 1171–1178 participates in ATP binding; sequence GRTGAGKS.

This sequence belongs to the ABC transporter superfamily. ABCC family. Conjugate transporter (TC 3.A.1.208) subfamily.

It is found in the membrane. This Dictyostelium discoideum (Social amoeba) protein is ABC transporter C family member 2 (abcC2).